We begin with the raw amino-acid sequence, 353 residues long: Histidinol-phosphate aminotransferase (353 aa).

At lysine 218 the chain carries N6-(pyridoxal phosphate)lysine.

The protein belongs to the class-II pyridoxal-phosphate-dependent aminotransferase family. Histidinol-phosphate aminotransferase subfamily. Homodimer. The cofactor is pyridoxal 5'-phosphate.

The catalysed reaction is L-histidinol phosphate + 2-oxoglutarate = 3-(imidazol-4-yl)-2-oxopropyl phosphate + L-glutamate. Its pathway is amino-acid biosynthesis; L-histidine biosynthesis; L-histidine from 5-phospho-alpha-D-ribose 1-diphosphate: step 7/9. This chain is Histidinol-phosphate aminotransferase, found in Synechococcus sp. (strain JA-2-3B'a(2-13)) (Cyanobacteria bacterium Yellowstone B-Prime).